We begin with the raw amino-acid sequence, 269 residues long: RBPJ-interacting and tubulin-associated protein 1 (269 aa).

Residues 5–17 (VELAISGMQTLHV) carry the Nuclear export signal motif. Disordered regions lie at residues 67–94 (GTGVSQALGANGSCESTSSSGSTPTLTP) and 145–269 (PATP…PPWK). Residues 79–93 (SCESTSSSGSTPTLT) are compositionally biased toward low complexity. Residues 92 to 108 (LTPRKKNKYRLISHTPS) carry the Nuclear localization signal motif. The interaction with RBPJ/RBPSUH stretch occupies residues 128 to 156 (WMARGDAAKLHALFWTPPATPRGSHSPRP). An interaction with tubulin region spans residues 156–269 (PRETPVRCVH…ATQKTKPPWK (114 aa)). 2 stretches are compositionally biased toward polar residues: residues 202–220 (LTHPNVPSTGHTPASSPCT) and 247–269 (VSVSVPTTPRQGGATQKTKPPWK).

Belongs to the RITA family. In terms of assembly, interacts with RBPJ/RBPSUH.

The protein resides in the cytoplasm. It is found in the nucleus. The protein localises to the cytoskeleton. Its subcellular location is the microtubule organizing center. It localises to the centrosome. In terms of biological role, tubulin-binding protein that acts as a negative regulator of Notch signaling pathway. Shuttles between the cytoplasm and the nucleus and mediates the nuclear export of RBPJ/RBPSUH, thereby preventing the interaction between RBPJ/RBPSUH and NICD product of Notch proteins (Notch intracellular domain), leading to down-regulate Notch-mediated transcription. May play a role in neurogenesis. This is RBPJ-interacting and tubulin-associated protein 1 (RITA1) from Bos taurus (Bovine).